Reading from the N-terminus, the 49-residue chain is Photosystem I reaction center subunit IX (49 aa).

The helical transmembrane segment at 14-34 (FISTAPVAATIWLTITAGILI) threads the bilayer.

Belongs to the PsaJ family.

The protein localises to the cellular thylakoid membrane. Its function is as follows. May help in the organization of the PsaE and PsaF subunits. The sequence is that of Photosystem I reaction center subunit IX from Nostoc punctiforme (strain ATCC 29133 / PCC 73102).